We begin with the raw amino-acid sequence, 404 residues long: Arginine biosynthesis bifunctional protein ArgJ (404 aa).

Residues Thr-166, Lys-189, Thr-200, Glu-280, Asn-399, and Ser-404 each coordinate substrate. Catalysis depends on Thr-200, which acts as the Nucleophile.

It belongs to the ArgJ family. Heterotetramer of two alpha and two beta chains.

It is found in the cytoplasm. The enzyme catalyses N(2)-acetyl-L-ornithine + L-glutamate = N-acetyl-L-glutamate + L-ornithine. It catalyses the reaction L-glutamate + acetyl-CoA = N-acetyl-L-glutamate + CoA + H(+). It participates in amino-acid biosynthesis; L-arginine biosynthesis; L-ornithine and N-acetyl-L-glutamate from L-glutamate and N(2)-acetyl-L-ornithine (cyclic): step 1/1. It functions in the pathway amino-acid biosynthesis; L-arginine biosynthesis; N(2)-acetyl-L-ornithine from L-glutamate: step 1/4. Functionally, catalyzes two activities which are involved in the cyclic version of arginine biosynthesis: the synthesis of N-acetylglutamate from glutamate and acetyl-CoA as the acetyl donor, and of ornithine by transacetylation between N(2)-acetylornithine and glutamate. This Mycobacterium bovis (strain ATCC BAA-935 / AF2122/97) protein is Arginine biosynthesis bifunctional protein ArgJ.